The following is a 523-amino-acid chain: 2-hydroxyisoflavanone synthase (523 aa).

The chain crosses the membrane as a helical span at residues 2-22; that stretch reads LVELAITLLVIALFIHLRPTL. Cys-450 provides a ligand contact to heme.

It belongs to the cytochrome P450 family. Requires heme as cofactor.

Its subcellular location is the microsome membrane. It catalyses the reaction (2S)-liquiritigenin + reduced [NADPH--hemoprotein reductase] + O2 = (2R,3S)-2,4',7-trihydroxyisoflavanone + oxidized [NADPH--hemoprotein reductase] + H2O + H(+). It carries out the reaction (2S)-naringenin + reduced [NADPH--hemoprotein reductase] + O2 = 2-hydroxy-2,3-dihydrogenistein + oxidized [NADPH--hemoprotein reductase] + H2O + H(+). Its function is as follows. 2-hydroxyisoflavanone synthase, which catalyzes the hydroxylation associated with 1,2-aryl migration of flavanones. Converts liquiritigenin and naringenin into highly unstable precursors of the isoflavones daidzein and genistein. Acts only on substrates with (2S)-chirality. This chain is 2-hydroxyisoflavanone synthase (CYP93C2), found in Glycyrrhiza echinata (Licorice).